Reading from the N-terminus, the 860-residue chain is Nucleolar MIF4G domain-containing protein 1 (860 aa).

3 disordered regions span residues Met-1–Lys-172, Arg-191–Phe-211, and Gly-226–Ile-339. The tract at residues Met-1–Lys-269 is necessary for nucleolar localization and for targeting PPP1CA to the nucleolus. A compositionally biased stretch (basic residues) spans Val-20 to Arg-31. Ser-57 bears the Phosphoserine mark. A compositionally biased stretch (basic residues) spans Gly-77–Gln-99. The segment covering Gly-115 to Arg-131 has biased composition (basic and acidic residues). A Phosphoserine modification is found at Ser-139. Over residues Arg-142–Ala-151 the composition is skewed to basic residues. Residues Lys-152–Ala-169 show a composition bias toward low complexity. 2 stretches are compositionally biased toward acidic residues: residues Ser-249–Val-267 and Ala-278–Glu-293. A Required for efficient binding to PPP1CA and for targeting PPP1CA to the nucleolus motif is present at residues Arg-307 to Phe-310. Residues Glu-312 to Asp-325 show a composition bias toward acidic residues. Phosphoserine occurs at positions 317, 320, and 321. The MIF4G domain maps to Lys-362–Asp-559. The region spanning Asp-654 to Phe-770 is the MI domain.

Belongs to the CWC22 family. As to quaternary structure, may interact with EIF4A1, EIF4A2 and EIF4A3. Interacts with PPP1CA and PPP1CC. In terms of tissue distribution, expressed in heart and skeletal muscle.

Its subcellular location is the nucleus. It is found in the nucleolus. Its function is as follows. Plays a role in targeting PPP1CA to the nucleolus. The protein is Nucleolar MIF4G domain-containing protein 1 (NOM1) of Homo sapiens (Human).